Reading from the N-terminus, the 307-residue chain is Probable porphobilinogen deaminase (307 aa).

Cys-240 bears the S-(dipyrrolylmethanemethyl)cysteine mark.

It belongs to the HMBS family. Dipyrromethane serves as cofactor.

The catalysed reaction is 4 porphobilinogen + H2O = hydroxymethylbilane + 4 NH4(+). It participates in porphyrin-containing compound metabolism; protoporphyrin-IX biosynthesis; coproporphyrinogen-III from 5-aminolevulinate: step 2/4. In terms of biological role, tetrapolymerization of the monopyrrole PBG into the hydroxymethylbilane pre-uroporphyrinogen in several discrete steps. This chain is Probable porphobilinogen deaminase (hemC), found in Aeropyrum pernix (strain ATCC 700893 / DSM 11879 / JCM 9820 / NBRC 100138 / K1).